Here is a 338-residue protein sequence, read N- to C-terminus: MKVYYDKDADLSLIKGKTVAIIGYGSQGHAHAQNLNDSGVKVVVGLRKGGASWPKVEKAGLKVAEVADAVKAADVVMILLPDEQIASVYKNDVAPNIKEGASLVFAHGFNVHYGFVQPRADLDVWMVAPKAPGHTVRSTYTQGGGVPHLVAVHQDKSGKARDLALSYATANGGGKAGIIETNFREETETDLFGEQAVLCGGTVELIKAGFETLVEAGYAPEMAYFECLHELKLIVDLIYEGGIANMNYSISNNAEYGEYVTGPRIVTEETKKVMKQVLKDIQTGEYAKSFVLENAAGAPTLISRRRLNSEHQIEVVGEKLRAMMPWIKKNKLVDQTRN.

In terms of domain architecture, KARI N-terminal Rossmann spans 1-181 (MKVYYDKDAD…GGGKAGIIET (181 aa)). Residues 24-27 (YGSQ), Arg47, and Ser52 each bind NADP(+). His107 is an active-site residue. Gly133 contacts NADP(+). In terms of domain architecture, KARI C-terminal knotted spans 182–327 (NFREETETDL…EKLRAMMPWI (146 aa)). Mg(2+)-binding residues include Asp190, Glu194, Glu226, and Glu230. A substrate-binding site is contributed by Ser251.

It belongs to the ketol-acid reductoisomerase family. Requires Mg(2+) as cofactor.

The catalysed reaction is (2R)-2,3-dihydroxy-3-methylbutanoate + NADP(+) = (2S)-2-acetolactate + NADPH + H(+). The enzyme catalyses (2R,3R)-2,3-dihydroxy-3-methylpentanoate + NADP(+) = (S)-2-ethyl-2-hydroxy-3-oxobutanoate + NADPH + H(+). It functions in the pathway amino-acid biosynthesis; L-isoleucine biosynthesis; L-isoleucine from 2-oxobutanoate: step 2/4. Its pathway is amino-acid biosynthesis; L-valine biosynthesis; L-valine from pyruvate: step 2/4. Its function is as follows. Involved in the biosynthesis of branched-chain amino acids (BCAA). Catalyzes an alkyl-migration followed by a ketol-acid reduction of (S)-2-acetolactate (S2AL) to yield (R)-2,3-dihydroxy-isovalerate. In the isomerase reaction, S2AL is rearranged via a Mg-dependent methyl migration to produce 3-hydroxy-3-methyl-2-ketobutyrate (HMKB). In the reductase reaction, this 2-ketoacid undergoes a metal-dependent reduction by NADPH to yield (R)-2,3-dihydroxy-isovalerate. This Variovorax paradoxus (strain S110) protein is Ketol-acid reductoisomerase (NADP(+)).